Here is a 733-residue protein sequence, read N- to C-terminus: Histone-lysine N-methyltransferase, H3 lysine-36 specific (733 aa).

The segment at 1-32 is disordered; that stretch reads MSKNQSVSASEDEKEILNNNAEGHKPQRLFDQ. Phosphoserine is present on Ser-10. Over residues 22 to 31 the composition is skewed to basic and acidic residues; sequence EGHKPQRLFD. The AWS domain maps to 63–118; that stretch reads NDFMECDCYEEFSDGVNHACDEDSDCINRLTLIECVNDLCSSCGNDCQNQRFQKKQ. The SET domain maps to 120–237; the sequence is APIAIFKTKH…KGEEITFDYN (118 aa). A Post-SET domain is found at 244-260; sequence QAQKCYCEEPNCIGFLG. Residues 475–507 enclose the WW domain; that stretch reads VRLPPGWEIIHENGRPLYYNAEQKTKLHYPPSG. 2 disordered regions span residues 504 to 548 and 672 to 692; these read PPSG…EEYE and KELK…GKRH. Residues 506–528 are compositionally biased toward polar residues; sequence SGSSKVFSSRSNTQVNSPSSSGI. Ser-522 is subject to Phosphoserine. A coiled-coil region spans residues 548–630; sequence ERKKQKRLEY…TVSQSQRLEH (83 aa). The tract at residues 619–718 is binding to RNA polymerase II CTD; it reads RKTVSQSQRL…KKQKKALALS (100 aa). Basic and acidic residues predominate over residues 672 to 688; it reads KELKKDSSRAPPDDLTK.

It belongs to the class V-like SAM-binding methyltransferase superfamily. Histone-lysine methyltransferase family. SET2 subfamily. As to quaternary structure, interacts with the RNA polymerase II hyperphosphorylated CTD. Interacts with CYC8.

It localises to the nucleus. The protein resides in the chromosome. The catalysed reaction is L-lysyl(36)-[histone H3] + 3 S-adenosyl-L-methionine = N(6),N(6),N(6)-trimethyl-L-lysyl(36)-[histone H3] + 3 S-adenosyl-L-homocysteine + 3 H(+). Histone methyltransferase that trimethylates histone H3 'Lys-36' forming H3K36me3. Involved in transcription elongation as well as in transcription repression. The methyltransferase activity requires the recruitment to the RNA polymerase II, which is CTK1 dependent. This chain is Histone-lysine N-methyltransferase, H3 lysine-36 specific (SET2), found in Saccharomyces cerevisiae (strain ATCC 204508 / S288c) (Baker's yeast).